The primary structure comprises 146 residues: Probable glycine cleavage system H protein 1, mitochondrial (146 aa).

The N-terminal 30 residues, 1–30 (MLKTLRFGTRAFGQNLNIAKRNFCTRYTND), are a transit peptide targeting the mitochondrion. Residues 41 to 123 (NYRLGITDFA…MGDGWIVEYK (83 aa)) form the Lipoyl-binding domain. Lysine 82 is subject to N6-lipoyllysine.

It belongs to the GcvH family. The glycine cleavage system is composed of four proteins: P, T, L and H. The cofactor is (R)-lipoate.

The protein resides in the mitochondrion. In terms of biological role, the glycine cleavage system catalyzes the degradation of glycine. The H protein shuttles the methylamine group of glycine from the P protein to the T protein. This chain is Probable glycine cleavage system H protein 1, mitochondrial (gcvH1), found in Dictyostelium discoideum (Social amoeba).